Here is a 391-residue protein sequence, read N- to C-terminus: Saxitoxin and tetrodotoxin-binding protein 1 (391 aa).

Positions 1–20 (MGAVPGVVLLLMLAVLGIRA) are cleaved as a signal peptide. Repeat copies occupy residues 24-202 (PEEC…HKKS) and 203-391 (PEEC…PEQD). Residues N54, N63, N97, N234, N268, N277, and N307 are each glycosylated (N-linked (GlcNAc...) asparagine).

In terms of assembly, homodimer or heterodimer of PSTBP1 and PSTBP2. Post-translationally, glycosylated.

The protein resides in the secreted. In terms of biological role, binds both saxitoxin and tetradotoxin. May play a role in toxin accumulation and/or excretion. The sequence is that of Saxitoxin and tetrodotoxin-binding protein 1 (psbp1) from Takifugu pardalis (Panther puffer).